A 338-amino-acid chain; its full sequence is DNA-directed RNA polymerase subunit alpha (338 aa).

The alpha N-terminal domain (alpha-NTD) stretch occupies residues 1–234 (MIQKNWQELI…DQLEIFVNFE (234 aa)). The segment at 250 to 338 (FSPALLKKVD…ELAKRFEEHY (89 aa)) is alpha C-terminal domain (alpha-CTD).

It belongs to the RNA polymerase alpha chain family. In terms of assembly, homodimer. The RNAP catalytic core consists of 2 alpha, 1 beta, 1 beta' and 1 omega subunit. When a sigma factor is associated with the core the holoenzyme is formed, which can initiate transcription.

The enzyme catalyses RNA(n) + a ribonucleoside 5'-triphosphate = RNA(n+1) + diphosphate. In terms of biological role, DNA-dependent RNA polymerase catalyzes the transcription of DNA into RNA using the four ribonucleoside triphosphates as substrates. The chain is DNA-directed RNA polymerase subunit alpha from Xanthobacter autotrophicus (strain ATCC BAA-1158 / Py2).